Here is a 454-residue protein sequence, read N- to C-terminus: CCA-adding enzyme (454 aa).

ATP-binding residues include Ser-59 and Arg-62. The CTP site is built by Ser-59 and Arg-62. Residues Asp-71, Asp-73, and Asp-125 each contribute to the Mg(2+) site. Residues His-148, Lys-167, and Tyr-176 each coordinate ATP. Positions 148, 167, and 176 each coordinate CTP.

This sequence belongs to the tRNA nucleotidyltransferase/poly(A) polymerase family. Archaeal CCA-adding enzyme subfamily. In terms of assembly, homodimer. The cofactor is Mg(2+).

It catalyses the reaction a tRNA precursor + 2 CTP + ATP = a tRNA with a 3' CCA end + 3 diphosphate. It carries out the reaction a tRNA with a 3' CCA end + 2 CTP + ATP = a tRNA with a 3' CCACCA end + 3 diphosphate. In terms of biological role, catalyzes the addition and repair of the essential 3'-terminal CCA sequence in tRNAs without using a nucleic acid template. Adds these three nucleotides in the order of C, C, and A to the tRNA nucleotide-73, using CTP and ATP as substrates and producing inorganic pyrophosphate. tRNA 3'-terminal CCA addition is required both for tRNA processing and repair. Also involved in tRNA surveillance by mediating tandem CCA addition to generate a CCACCA at the 3' terminus of unstable tRNAs. While stable tRNAs receive only 3'-terminal CCA, unstable tRNAs are marked with CCACCA and rapidly degraded. This Methanosarcina acetivorans (strain ATCC 35395 / DSM 2834 / JCM 12185 / C2A) protein is CCA-adding enzyme.